The following is a 288-amino-acid chain: Acidic endochitinase SP2 (288 aa).

The N-terminal stretch at 1–27 (MTLLLKNTLYLALIISVISSFPTSLFA) is a signal peptide. Q28 is modified (pyrrolidone carboxylic acid). In terms of domain architecture, Chitin-binding type-1 spans 28 to 63 (QNCGCAPNLCCSNFGFCGTGTPYCGVGNCQSGPCEG). Cystine bridges form between C30–C38, C32–C44, C37–C51, and C56–C61. Low complexity predominate over residues 64–78 (GTPTTPTTPTTPTTP). The interval 64–84 (GTPTTPTTPTTPTTPGTGGGG) is disordered. The hinge region (Gly/Pro/Thr-rich) stretch occupies residues 64 to 85 (GTPTTPTTPTTPTTPGTGGGGS). 4-hydroxyproline is present on residues P66, P69, P72, and P75. Tandem repeats lie at residues 67-69 (TTP), 70-72 (TTP), 73-75 (TTP), and 76-78 (TTP). A 4 X 3 AA tandem repeats of T-T-P region spans residues 67–78 (TTPTTPTTPTTP). Positions 86 to 288 (SVSDIVSQAF…GVAPGDNLTC (203 aa)) are catalytic. Disulfide bonds link C107–C154, C168–C178, and C256–C288. The active-site Proton donor is the E149.

Belongs to the glycosyl hydrolase 19 family. Chitinase class I subfamily. Post-translationally, O-glycosylated on hydroxyprolines; contains xylose. As to expression, localized to infected area.

The protein localises to the secreted. The protein resides in the extracellular space. It catalyses the reaction Random endo-hydrolysis of N-acetyl-beta-D-glucosaminide (1-&gt;4)-beta-linkages in chitin and chitodextrins.. Defense against chitin-containing fungal pathogens. This is Acidic endochitinase SP2 (SP2) from Beta vulgaris (Sugar beet).